An 832-amino-acid polypeptide reads, in one-letter code: MALKLVLMLMVALLAAVWSPPAVTASVTYDHKSVIINGQRRILISGSIHYPRSTPEMWPDLIQKAKDGGLDVIQTYVFWNGHEPSPGQYYFGGRYDLVRFLKLVKQAGLYAHLRIGPYVCAEWNFGGFPVWLKYVPGIHFRTDNGPFKAAMGKFTEKIVSMMKAEGLYETQGGPIILSQIENEYGPVEYYDGAAGKSYTNWAAKMAVGLNTGVPWVMCKQDDAPDPVINTCNGFYCDYFSPNKDNKPKMWTEAWTGWFTGFGGAVPQRPAEDMAFAVARFIQKGGSFINYYMYHGGTNFGRTAGGPFISTSYDYDAPIDEYGLLRQPKWGHLRDLHKAIKLCEPALVSGEPTITSLGQNQESYVYRSKSSCAAFLANFNSRYYATVTFNGMHYNLPPWSVSILPDCKTTVFNTARVGAQTTTMKMQYLGGFSWKAYTEDTDALNDNTFTKDGLVEQLSTTWDRSDYLWYTTYVDIAKNEEFLKTGKYPYLTVMSAGHAVHVFINGQLSGTAYGSLDNPKLTYSGSAKLWAGSNKISILSVSVGLPNVGNHFETWNTGVLGPVTLTGLNEGKRDLSLQKWTYQIGLHGETLSLHSLTGSSNVEWGEASQKQPLTWYKTFFNAPPGNEPLALDMNTMGKGQIWINGQSIGRYWPAYKASGSCGSCDYRGTYNEKKCLSNCGEASQRWYHVPRSWLIPTGNFLVVLEEWGGDPTGISMVKRSVASVCAEVEELQPTMDNWRTKAYGRPKVHLSCDPGQKMSKIKFASFGTPQGTCGSFSEGSCHAHKSYDAFEQEGLMQNCVGQEFCSVNVAPEVFGGDPCPGTMKKLAVEAICE.

Positions 1–25 (MALKLVLMLMVALLAAVWSPPAVTA) are cleaved as a signal peptide. The Proton donor role is filled by Glu183. Glu252 acts as the Nucleophile in catalysis. The SUEL-type lectin domain occupies 741–832 (AYGRPKVHLS…KKLAVEAICE (92 aa)).

This sequence belongs to the glycosyl hydrolase 35 family.

It is found in the secreted. It localises to the extracellular space. The protein localises to the apoplast. It carries out the reaction Hydrolysis of terminal non-reducing beta-D-galactose residues in beta-D-galactosides.. In Asparagus officinalis (Garden asparagus), this protein is Beta-galactosidase.